Consider the following 490-residue polypeptide: Betaine aldehyde dehydrogenase (490 aa).

Residues serine 26, isoleucine 27, and aspartate 93 each contribute to the K(+) site. 150–152 contributes to the NAD(+) binding site; that stretch reads GAW. Lysine 162 serves as the catalytic Charge relay system. Residues 176–179 and 230–233 each bind NAD(+); these read KPSE and GVET. Leucine 246 provides a ligand contact to K(+). Glutamate 252 acts as the Proton acceptor in catalysis. NAD(+)-binding residues include glycine 254, cysteine 286, and glutamate 387. The active-site Nucleophile is cysteine 286. Cysteine 286 bears the Cysteine sulfenic acid (-SOH) mark. K(+) is bound by residues lysine 457 and glycine 460. Glutamate 464 functions as the Charge relay system in the catalytic mechanism.

This sequence belongs to the aldehyde dehydrogenase family. Dimer of dimers. It depends on K(+) as a cofactor.

It carries out the reaction betaine aldehyde + NAD(+) + H2O = glycine betaine + NADH + 2 H(+). The protein operates within amine and polyamine biosynthesis; betaine biosynthesis via choline pathway; betaine from betaine aldehyde: step 1/1. Functionally, involved in the biosynthesis of the osmoprotectant glycine betaine. Catalyzes the irreversible oxidation of betaine aldehyde to the corresponding acid. The polypeptide is Betaine aldehyde dehydrogenase (Acinetobacter baumannii (strain AB307-0294)).